The primary structure comprises 471 residues: Citrate synthase, mitochondrial (471 aa).

Active-site residues include histidine 309, histidine 355, and aspartate 409.

It belongs to the citrate synthase family. As to quaternary structure, homodimer. In terms of tissue distribution, ubiquitous.

The protein resides in the mitochondrion matrix. The enzyme catalyses oxaloacetate + acetyl-CoA + H2O = citrate + CoA + H(+). It functions in the pathway carbohydrate metabolism; tricarboxylic acid cycle; isocitrate from oxaloacetate: step 1/2. The protein is Citrate synthase, mitochondrial of Solanum tuberosum (Potato).